The chain runs to 322 residues: Transmembrane protein 171 (322 aa).

4 consecutive transmembrane segments (helical) span residues 22–42 (IFFL…LSIF), 57–77 (IVLK…VILA), 112–132 (LIFG…GIWV), and 159–179 (FLSL…FFVV). Residues 223–322 (PPPYFPESSA…LGAPSDASPP (100 aa)) form a disordered region. Low complexity predominate over residues 228–241 (PESSAAAPSPGANS). Composition is skewed to polar residues over residues 242–267 (LHQI…NQGA) and 279–289 (ISGQGSSSERS).

The protein resides in the membrane. The chain is Transmembrane protein 171 (Tmem171) from Mus musculus (Mouse).